A 380-amino-acid polypeptide reads, in one-letter code: Protein FAM110B (380 aa).

The disordered stretch occupies residues 92–272 (ALGSPTLKGF…RPSLQRSKSD (181 aa)). Positions 100 to 110 (GFGGGGGGAKS) are enriched in gly residues. Over residues 127 to 138 (ILNSSEGSSTGS) the composition is skewed to polar residues. The segment covering 153-162 (DAAELHRHSF) has biased composition (basic and acidic residues). Positions 239–248 (KVAAPAAVKS) are enriched in low complexity. Phosphoserine occurs at positions 248 and 311. Residues 327–347 (DCEQSQDSNSDLRNDDSANDR) form a disordered region. The span at 336–345 (SDLRNDDSAN) shows a compositional bias: basic and acidic residues.

Belongs to the FAM110 family.

Its subcellular location is the cytoplasm. It localises to the cytoskeleton. The protein localises to the microtubule organizing center. It is found in the centrosome. This Bos taurus (Bovine) protein is Protein FAM110B (FAM110B).